The following is a 216-amino-acid chain: Thylakoid lumenal 16.5 kDa protein, chloroplastic (216 aa).

The transit peptide at 1 to 38 (MAKSLLCSSTLNPFFSTTLSSSKKNQIAYSGNSKNQTS) directs the protein to the chloroplast. A thylakoid-targeting transit peptide spans 39–73 (SSLLWKRRELSLGFMSSLVAIGLVSNDRRRHDANA).

Its subcellular location is the plastid. The protein resides in the chloroplast thylakoid lumen. The chain is Thylakoid lumenal 16.5 kDa protein, chloroplastic from Arabidopsis thaliana (Mouse-ear cress).